We begin with the raw amino-acid sequence, 115 residues long: U3-lycotoxin-Ls1a (115 aa).

Residues 1 to 20 form the signal peptide; it reads MKFVLLFGVLLVTFFSYSSA. Positions 21 to 44 are excised as a propeptide; it reads EMLDDFDQADEDELLSLIEKGEAR. Disulfide bonds link C48–C63, C55–C72, C62–C87, and C74–C85.

This sequence belongs to the neurotoxin 19 (CSTX) family. 01 subfamily. As to expression, expressed by the venom gland.

Its subcellular location is the secreted. The sequence is that of U3-lycotoxin-Ls1a from Lycosa singoriensis (Wolf spider).